The primary structure comprises 455 residues: Bifunctional protein GlmU (455 aa).

Residues 1 to 226 (MSLDIVILAA…AMEVQGANDR (226 aa)) form a pyrophosphorylase region. UDP-N-acetyl-alpha-D-glucosamine-binding positions include 8 to 11 (LAAG), Lys22, Gln73, 78 to 79 (GT), 99 to 101 (YGD), Gly136, Glu151, Asn166, and Asn224. Asp101 is a Mg(2+) binding site. Asn224 lines the Mg(2+) pocket. The tract at residues 227-247 (KQLSELERHYQMREARRLMAA) is linker. The tract at residues 248-455 (GVTLRDPARF…WKRPVKISKD (208 aa)) is N-acetyltransferase. UDP-N-acetyl-alpha-D-glucosamine contacts are provided by Arg330 and Lys348. Catalysis depends on His360, which acts as the Proton acceptor. UDP-N-acetyl-alpha-D-glucosamine-binding residues include Tyr363 and Asn374. Residues Ala377, 383–384 (NY), Ser402, Ala420, and Arg437 each bind acetyl-CoA.

The protein in the N-terminal section; belongs to the N-acetylglucosamine-1-phosphate uridyltransferase family. This sequence in the C-terminal section; belongs to the transferase hexapeptide repeat family. Homotrimer. Mg(2+) serves as cofactor.

The protein localises to the cytoplasm. The catalysed reaction is alpha-D-glucosamine 1-phosphate + acetyl-CoA = N-acetyl-alpha-D-glucosamine 1-phosphate + CoA + H(+). The enzyme catalyses N-acetyl-alpha-D-glucosamine 1-phosphate + UTP + H(+) = UDP-N-acetyl-alpha-D-glucosamine + diphosphate. It functions in the pathway nucleotide-sugar biosynthesis; UDP-N-acetyl-alpha-D-glucosamine biosynthesis; N-acetyl-alpha-D-glucosamine 1-phosphate from alpha-D-glucosamine 6-phosphate (route II): step 2/2. It participates in nucleotide-sugar biosynthesis; UDP-N-acetyl-alpha-D-glucosamine biosynthesis; UDP-N-acetyl-alpha-D-glucosamine from N-acetyl-alpha-D-glucosamine 1-phosphate: step 1/1. Its pathway is bacterial outer membrane biogenesis; LPS lipid A biosynthesis. In terms of biological role, catalyzes the last two sequential reactions in the de novo biosynthetic pathway for UDP-N-acetylglucosamine (UDP-GlcNAc). The C-terminal domain catalyzes the transfer of acetyl group from acetyl coenzyme A to glucosamine-1-phosphate (GlcN-1-P) to produce N-acetylglucosamine-1-phosphate (GlcNAc-1-P), which is converted into UDP-GlcNAc by the transfer of uridine 5-monophosphate (from uridine 5-triphosphate), a reaction catalyzed by the N-terminal domain. This chain is Bifunctional protein GlmU, found in Pseudomonas syringae pv. syringae (strain B728a).